The primary structure comprises 218 residues: UPF0329 protein ECU10_1860 (218 aa).

The protein belongs to the UPF0329 family.

The polypeptide is UPF0329 protein ECU10_1860 (Encephalitozoon cuniculi (strain GB-M1) (Microsporidian parasite)).